Here is a 221-residue protein sequence, read N- to C-terminus: DELTA-actitoxin-Ucs1a (221 aa).

An N-terminal signal peptide occupies residues 1 to 19 (MNRLIVLCLFVAMIYATIA). A propeptide spanning residues 20–42 (LPKKEDISNDERSISVSKVPVKK) is cleaved from the precursor. Residues 45 to 54 (AIAGAVIEGA) are plays an important role in the hemolytic activity. Residues 53 to 72 (GAKLTFGILEKILTVLGDIN) are N-terminal region. 7 residues coordinate phosphocholine: serine 96, valine 129, serine 147, proline 149, tyrosine 175, tyrosine 179, and tyrosine 180. The trp-rich region, which is important for the binding to lipid membrane stretch occupies residues 147–162 (SVPYDYNLYSNWWNIK). The Cell attachment site, crucial for protein stability signature appears at 186 to 188 (KGD).

The protein belongs to the actinoporin family. Sea anemone subfamily. In terms of assembly, octamer or nonamer in membranes. Monomer in the soluble state.

It localises to the secreted. It is found in the nematocyst. The protein localises to the target cell membrane. Its function is as follows. Pore-forming protein that forms cations-selective hydrophilic pores of around 1 nm and causes cytolysis. Pore formation is a multi-step process that involves specific recognition of membrane sphingomyelin (but neither cholesterol nor phosphatidylcholine) using aromatic rich region and adjacent phosphocholine (POC) binding site, firm binding to the membrane (mainly driven by hydrophobic interactions) accompanied by the transfer of the N-terminal region to the lipid-water interface and finally pore formation after oligomerization of monomers. In Urticina crassicornis (Mottled anemone), this protein is DELTA-actitoxin-Ucs1a.